A 726-amino-acid chain; its full sequence is Netrin-A (726 aa).

An N-terminal signal peptide occupies residues methionine 1–methionine 29. Residues glutamate 46 to arginine 312 enclose the Laminin N-terminal domain. N-linked (GlcNAc...) asparagine glycosylation is found at asparagine 108, asparagine 112, and asparagine 127. 12 disulfide bridges follow: cysteine 313/cysteine 322, cysteine 315/cysteine 332, cysteine 334/cysteine 343, cysteine 346/cysteine 366, cysteine 369/cysteine 378, cysteine 371/cysteine 396, cysteine 399/cysteine 408, cysteine 411/cysteine 429, cysteine 432/cysteine 444, cysteine 434/cysteine 451, cysteine 453/cysteine 462, and cysteine 465/cysteine 479. Laminin EGF-like domains lie at cysteine 313–glutamate 368, cysteine 369–alanine 431, and cysteine 432–lysine 481. The N-linked (GlcNAc...) asparagine glycan is linked to asparagine 445. A disordered region spans residues leucine 490–alanine 516. 2 disulfides stabilise this stretch: cysteine 533–cysteine 671 and cysteine 549–cysteine 725. In terms of domain architecture, NTR spans cysteine 533 to cysteine 725. 2 N-linked (GlcNAc...) asparagine glycosylation sites follow: asparagine 652 and asparagine 679.

At the midline of developing CNS at the time of commissure formation and in different subsets of neurons, muscles, and epidermal patches.

It localises to the secreted. Its subcellular location is the extracellular space. The protein resides in the extracellular matrix. Its function is as follows. Netrins control guidance of CNS commissural axons at the midline and peripheral motor axons to their target muscles. This is Netrin-A (NetA) from Drosophila melanogaster (Fruit fly).